The following is a 335-amino-acid chain: 3-ketodihydrosphingosine reductase TSC10 (335 aa).

The NADPH site is built by G42, S44, S45, and G46. The GXSXG signature appears at 42-46; the sequence is GGSSG. NADP(+) is bound at residue L47. R67, D68, K71, D95, and L96 together coordinate NADPH. D95 is an NADP(+) binding site. Y190, K194, and I223 together coordinate NADP(+). Y190 serves as the catalytic Proton acceptor. The Lowers pKa of active site Tyr role is filled by K194. Residues 288–308 form a helical membrane-spanning segment; it reads TNNFLLDTLWLIVSSVGVPIW.

The protein belongs to the short-chain dehydrogenases/reductases (SDR) family.

It is found in the endoplasmic reticulum membrane. It carries out the reaction sphinganine + NADP(+) = 3-oxosphinganine + NADPH + H(+). It participates in lipid metabolism; sphingolipid metabolism. In terms of biological role, catalyzes the reduction of 3'-oxosphinganine (3-ketodihydrosphingosine/KDS) to sphinganine (dihydrosphingosine/DHS), the second step of de novo sphingolipid biosynthesis. This Cryptococcus neoformans var. neoformans serotype D (strain B-3501A) (Filobasidiella neoformans) protein is 3-ketodihydrosphingosine reductase TSC10 (TSC10).